The chain runs to 796 residues: MAGRVESSIGGGEIDEEGDERGSMWDLDQSLDQPMDEEAGRLRNMYREKKFSAFLLLQLSFQSLGVVYGDLGTSPLYVFYNTFPRGIKDPEDIIGALSLIIYSLTLIPLLKYVFVVCKANDNGQGGTFALYSLLCRHAKVSTIPNQHRTDEELTTYSRTTFHERSFAAKTKRWLENGTSRKNALLILVLVGTCMVIGDGILTPAISVLSAAGGLRVNLPHINNGIVVVVAVVILVSLFSVQHYGTDRVGWLFAPIVFLWFLFIASIGMFNIWKHDPSVLKAFSPVYIFRYFKRGGQDRWTSLGGIMLSITGIEALFADLSHFPVSAVQFAFTVIVFPCLLLAYSGQAAYLRKYPHHVEDAFYQSIPKRVYWPMFIIATAAAIVASQATISATFSLIKQALAHGCFPRVKVVHTSRKFLGQIYVPDINWILMILCIAVTAGFKNQNQIGNAYGTAVVIVMLVTTLLMMLIMILVWRCHWVLVLLFTLLSLVVECTYFSAVLFKVNQGGWVPLVIAAAFLVIMYVWHYGTLKRYEFEMHSKVSMAWILGLGPSLGLVRVPGIGLVYTELASGVPHIFSHFITNLPATHSVVIFVCVKNLPVYTVPQEERFLVKRIGPKNFHMFRCVARYGYRDLHKKDDDFEKRLFESLFLFLRLESMMEGCSDSEDYSVCGSQQRQSRDGVNGNGNEIRNVSTFDTFDSIESVIAPTTTKRTSHTVTGSSQMSGGGDEVEFINGCRDAGVVHIMGNTVVRARREARFYKRIAIDYVYAFLRKICRENSAIFNVPQESLLNVGQIFYV.

The tract at residues Met-1–Ser-30 is disordered. The Cytoplasmic portion of the chain corresponds to Met-1–Gln-58. A helical transmembrane segment spans residues Leu-59–Phe-79. The Extracellular portion of the chain corresponds to Tyr-80–Gly-95. Residues Ala-96–Val-116 traverse the membrane as a helical segment. Topologically, residues Cys-117–Leu-184 are cytoplasmic. A helical transmembrane segment spans residues Leu-185–Ile-205. The Extracellular portion of the chain corresponds to Ser-206–Asn-217. The helical transmembrane segment at Leu-218–Phe-238 threads the bilayer. The Cytoplasmic portion of the chain corresponds to Ser-239–Val-248. The helical transmembrane segment at Gly-249 to Phe-269 threads the bilayer. Residues Asn-270 to Arg-298 are Extracellular-facing. The chain crosses the membrane as a helical span at residues Trp-299 to Leu-319. The Cytoplasmic segment spans residues Ser-320–His-321. The helical transmembrane segment at Phe-322–Ala-342 threads the bilayer. The Extracellular portion of the chain corresponds to Tyr-343 to Arg-368. Residues Val-369 to Ile-389 form a helical membrane-spanning segment. The Cytoplasmic segment spans residues Ser-390–Gln-420. A helical membrane pass occupies residues Ile-421 to Phe-441. At Lys-442–Thr-453 the chain is on the extracellular side. The chain crosses the membrane as a helical span at residues Ala-454 to Trp-474. Topologically, residues Arg-475–Leu-480 are cytoplasmic. A helical membrane pass occupies residues Val-481–Phe-501. The Extracellular segment spans residues Lys-502–Gln-505. A helical membrane pass occupies residues Gly-506–Tyr-526. Over Gly-527 to Val-796 the chain is Cytoplasmic.

Belongs to the HAK/KUP transporter (TC 2.A.72.3) family.

It localises to the cell membrane. Functionally, putative potassium transporter. This Arabidopsis thaliana (Mouse-ear cress) protein is Potassium transporter 10 (POT10).